Here is a 426-residue protein sequence, read N- to C-terminus: Serine--tRNA ligase (426 aa).

233-235 is a binding site for L-serine; that stretch reads TAE. 264–266 lines the ATP pocket; that stretch reads RSE. Glu-287 contacts L-serine. 351-354 provides a ligand contact to ATP; that stretch reads EISS. Residue Ser-387 coordinates L-serine.

The protein belongs to the class-II aminoacyl-tRNA synthetase family. Type-1 seryl-tRNA synthetase subfamily. Homodimer. The tRNA molecule binds across the dimer.

The protein resides in the cytoplasm. It carries out the reaction tRNA(Ser) + L-serine + ATP = L-seryl-tRNA(Ser) + AMP + diphosphate + H(+). It catalyses the reaction tRNA(Sec) + L-serine + ATP = L-seryl-tRNA(Sec) + AMP + diphosphate + H(+). It functions in the pathway aminoacyl-tRNA biosynthesis; selenocysteinyl-tRNA(Sec) biosynthesis; L-seryl-tRNA(Sec) from L-serine and tRNA(Sec): step 1/1. Functionally, catalyzes the attachment of serine to tRNA(Ser). Is also able to aminoacylate tRNA(Sec) with serine, to form the misacylated tRNA L-seryl-tRNA(Sec), which will be further converted into selenocysteinyl-tRNA(Sec). The chain is Serine--tRNA ligase from Pseudomonas putida (strain W619).